Consider the following 653-residue polypeptide: Choline transporter-like protein 3 (653 aa).

A helical membrane pass occupies residues 34 to 54 (WLFLFFLFWTGLVFIMGYSVV). N-linked (GlcNAc...) asparagine glycosylation is found at N136 and N151. Helical transmembrane passes span 213 to 233 (DTIL…MFTF), 243 to 263 (IFIS…WWLY), 284 to 304 (VLGF…LIFV), 334 to 354 (LWTF…LLSL), and 384 to 404 (LIGL…TIAG). 3 N-linked (GlcNAc...) asparagine glycosylation sites follow: N412, N503, and N521. The next 2 membrane-spanning stretches (helical) occupy residues 534 to 554 (FIIF…GLMA) and 563 to 583 (VWAV…HSFL). A disordered region spans residues 632–653 (RAQQDKHSLRNEEGTELQAIVR). Residues 634 to 644 (QQDKHSLRNEE) show a composition bias toward basic and acidic residues.

It belongs to the CTL (choline transporter-like) family.

The protein resides in the membrane. This chain is Choline transporter-like protein 3 (SLC44A3), found in Homo sapiens (Human).